The primary structure comprises 236 residues: MSHVSQETAQEISEEREARAIVYNFLSSLFAKEVTSDLVAQLTSAQGQSFLKSLALDPSLSASVNEINTKLVKLNSKESLLELAADFCGLFLVDGRTSVSPYAGQYLSVEQGGEPSEKLSNAAINESGSKSKKNKAQLFGELHQQMTEFLTDNKLQIHSDFPEPGDHIAVILAYIAHLCVTSGSEQQLNFINSYLMTWLSDFTQQVNKHDHGQFYCFVADLTFEWLKVDTEFLLSD.

Belongs to the TorD/DmsD family. TorD subfamily.

It localises to the cytoplasm. Functionally, involved in the biogenesis of TorA. Acts on TorA before the insertion of the molybdenum cofactor and, as a result, probably favors a conformation of the apoenzyme that is competent for acquiring the cofactor. The protein is Chaperone protein TorD of Colwellia psychrerythraea (strain 34H / ATCC BAA-681) (Vibrio psychroerythus).